The chain runs to 489 residues: UDP-N-acetylmuramoyl-L-alanyl-D-glutamate--2,6-diaminopimelate ligase (489 aa).

Position 30 (Ser30) interacts with UDP-N-acetyl-alpha-D-muramoyl-L-alanyl-D-glutamate. Gly113 to Ser119 lines the ATP pocket. UDP-N-acetyl-alpha-D-muramoyl-L-alanyl-D-glutamate-binding positions include Thr155–Thr156, Ser182, Gln188, and Arg190. Lys222 carries the N6-carboxylysine modification. Meso-2,6-diaminopimelate contacts are provided by residues Arg388, Asp412–Arg415, Gly463, and Glu467. Positions Asp412–Arg415 match the Meso-diaminopimelate recognition motif motif.

The protein belongs to the MurCDEF family. MurE subfamily. Mg(2+) is required as a cofactor. Carboxylation is probably crucial for Mg(2+) binding and, consequently, for the gamma-phosphate positioning of ATP.

Its subcellular location is the cytoplasm. It carries out the reaction UDP-N-acetyl-alpha-D-muramoyl-L-alanyl-D-glutamate + meso-2,6-diaminopimelate + ATP = UDP-N-acetyl-alpha-D-muramoyl-L-alanyl-gamma-D-glutamyl-meso-2,6-diaminopimelate + ADP + phosphate + H(+). It functions in the pathway cell wall biogenesis; peptidoglycan biosynthesis. Its function is as follows. Catalyzes the addition of meso-diaminopimelic acid to the nucleotide precursor UDP-N-acetylmuramoyl-L-alanyl-D-glutamate (UMAG) in the biosynthesis of bacterial cell-wall peptidoglycan. This chain is UDP-N-acetylmuramoyl-L-alanyl-D-glutamate--2,6-diaminopimelate ligase, found in Coxiella burnetii (strain RSA 493 / Nine Mile phase I).